The chain runs to 481 residues: Proline--tRNA ligase (481 aa).

Belongs to the class-II aminoacyl-tRNA synthetase family. ProS type 3 subfamily. As to quaternary structure, homodimer.

The protein resides in the cytoplasm. It carries out the reaction tRNA(Pro) + L-proline + ATP = L-prolyl-tRNA(Pro) + AMP + diphosphate. In terms of biological role, catalyzes the attachment of proline to tRNA(Pro) in a two-step reaction: proline is first activated by ATP to form Pro-AMP and then transferred to the acceptor end of tRNA(Pro). The protein is Proline--tRNA ligase of Chloroherpeton thalassium (strain ATCC 35110 / GB-78).